Reading from the N-terminus, the 656-residue chain is Vacuolar amino acid transporter 3 (656 aa).

Positions 1–109 (MSNSQSIKIK…VPSTSEDPDV (109 aa)) are disordered. Residues 15-28 (NENFASGSYSSRRS) are compositionally biased toward polar residues. Phosphoserine occurs at positions 37 and 53. Polar residues predominate over residues 50–71 (ISPSESNLPNNVAENTTDTPVN). Residues 75–97 (IRDENHNSRKGKDVTLNSDEAHS) show a composition bias toward basic and acidic residues. S172 carries the post-translational modification Phosphoserine. 11 helical membrane passes run 280 to 300 (AVLLLLKSFVGTGVLFLPKAF), 307 to 327 (FSSATLLIVGVLSHICFLLLI), 351 to 371 (FAILASIVVSQIGFSSAYISF), 389 to 409 (EYHLAVFIFIQFLVFVPLSLV), 419 to 439 (ALIADVFILLGILYLYFWDVI), 457 to 477 (FSLFIGVAIFTYEGICLILPI), 494 to 514 (VMAAISLLFISIGLLSYAAFG), 537 to 557 (LYAIAILLSTPLQLFPAIAII), 578 to 598 (YLRVLIVILAILISWAGSSRL), 601 to 621 (FVSMVGSVCCIPLIYMYPPML), and 636 to 656 (DIFMFTIGAFAMAFTTYMTFF).

Belongs to the amino acid/polyamine transporter 2 family.

It is found in the endoplasmic reticulum membrane. Its subcellular location is the vacuole membrane. In terms of biological role, involved in amino acid efflux from the vacuole to the cytoplasm. Capable of transporting large neutral amino acids including tyrosine, glutamine, asparagine, isoleucine and leucine. Required for spore formation. In Schizosaccharomyces pombe (strain 972 / ATCC 24843) (Fission yeast), this protein is Vacuolar amino acid transporter 3 (avt3).